Here is a 1036-residue protein sequence, read N- to C-terminus: Isoleucine--tRNA ligase (1036 aa).

The 'HIGH' region signature appears at 46-56; it reads PFATGLPHYGH. Positions 589 to 593 match the 'KMSKS' region motif; sequence KMSKR. Lys-592 is an ATP binding site.

The protein belongs to the class-I aminoacyl-tRNA synthetase family. IleS type 2 subfamily. Monomer. Requires Zn(2+) as cofactor.

It localises to the cytoplasm. It catalyses the reaction tRNA(Ile) + L-isoleucine + ATP = L-isoleucyl-tRNA(Ile) + AMP + diphosphate. In terms of biological role, catalyzes the attachment of isoleucine to tRNA(Ile). As IleRS can inadvertently accommodate and process structurally similar amino acids such as valine, to avoid such errors it has two additional distinct tRNA(Ile)-dependent editing activities. One activity is designated as 'pretransfer' editing and involves the hydrolysis of activated Val-AMP. The other activity is designated 'posttransfer' editing and involves deacylation of mischarged Val-tRNA(Ile). The polypeptide is Isoleucine--tRNA ligase (Chlamydia trachomatis serovar D (strain ATCC VR-885 / DSM 19411 / UW-3/Cx)).